Here is a 171-residue protein sequence, read N- to C-terminus: 3-hydroxydecanoyl-[acyl-carrier-protein] dehydratase (171 aa).

His-70 is an active-site residue.

Belongs to the thioester dehydratase family. FabA subfamily. Homodimer.

The protein resides in the cytoplasm. It catalyses the reaction a (3R)-hydroxyacyl-[ACP] = a (2E)-enoyl-[ACP] + H2O. The catalysed reaction is (3R)-hydroxydecanoyl-[ACP] = (2E)-decenoyl-[ACP] + H2O. It carries out the reaction (2E)-decenoyl-[ACP] = (3Z)-decenoyl-[ACP]. The protein operates within lipid metabolism; fatty acid biosynthesis. Necessary for the introduction of cis unsaturation into fatty acids. Catalyzes the dehydration of (3R)-3-hydroxydecanoyl-ACP to E-(2)-decenoyl-ACP and then its isomerization to Z-(3)-decenoyl-ACP. Can catalyze the dehydratase reaction for beta-hydroxyacyl-ACPs with saturated chain lengths up to 16:0, being most active on intermediate chain length. The protein is 3-hydroxydecanoyl-[acyl-carrier-protein] dehydratase of Xanthomonas campestris pv. campestris (strain 8004).